Consider the following 487-residue polypeptide: Cysteine--tRNA ligase (487 aa).

Cysteine 29 contributes to the Zn(2+) binding site. A 'HIGH' region motif is present at residues 31-41 (VTVYDVNHVGH). 3 residues coordinate Zn(2+): cysteine 209, histidine 234, and glutamate 238. A 'KMSKS' region motif is present at residues 266 to 270 (KMSKS). ATP is bound at residue lysine 269.

The protein belongs to the class-I aminoacyl-tRNA synthetase family. In terms of assembly, monomer. Zn(2+) is required as a cofactor.

The protein localises to the cytoplasm. The catalysed reaction is tRNA(Cys) + L-cysteine + ATP = L-cysteinyl-tRNA(Cys) + AMP + diphosphate. In Persephonella marina (strain DSM 14350 / EX-H1), this protein is Cysteine--tRNA ligase.